A 307-amino-acid chain; its full sequence is Plasmodesmata-located protein 2 (307 aa).

The first 23 residues, 1-23 (MGLSISFLSIIMMMCLLFPDLNV), serve as a signal peptide directing secretion. Over 24–275 (VVKSATTEYT…STSTGATGKT (252 aa)) the chain is Extracellular. Gnk2-homologous domains lie at 33 to 136 (TTLI…VSGF) and 141 to 240 (GMEM…YYPN). Disulfide bonds link Cys40–Cys114, Cys90–Cys99, Cys102–Cys127, Cys149–Cys218, Cys194–Cys203, and Cys206–Cys231. The span at 246 to 268 (SSSSSSSSSSSSSGSSNSDPSTS) shows a compositional bias: low complexity. Residues 246 to 270 (SSSSSSSSSSSSSGSSNSDPSTSTG) are disordered. The chain crosses the membrane as a helical span at residues 276-296 (VAIIVGGAAGVGFLVICLLFA). Positions 276–296 (VAIIVGGAAGVGFLVICLLFA) are necessary and sufficient for plasmodesmal targeting. At 297 to 307 (KNLMRKKHDDY) the chain is on the cytoplasmic side.

This sequence belongs to the cysteine-rich repeat secretory protein family. Plasmodesmata-located proteins (PDLD) subfamily. (Microbial infection) Interacts with Grapevine fanleaf virus (GFLV) 2B-MP. As to expression, highly expressed in inflorescence shoot apex. Uniformly expressed within the inflorescence meristem with the exception of a boundary zone between floral primordia and the meristem where the expression is weaker (at protein level).

It is found in the cell membrane. Its subcellular location is the cell junction. It localises to the plasmodesma. Its function is as follows. Modulates cell-to-cell trafficking. The polypeptide is Plasmodesmata-located protein 2 (Arabidopsis thaliana (Mouse-ear cress)).